The sequence spans 137 residues: Large-conductance mechanosensitive channel (137 aa).

2 helical membrane passes run 15 to 35 (VDLA…TSLV) and 81 to 101 (GKFI…FFVI).

Belongs to the MscL family. Homopentamer.

It localises to the cell inner membrane. Its function is as follows. Channel that opens in response to stretch forces in the membrane lipid bilayer. May participate in the regulation of osmotic pressure changes within the cell. In Hyphomonas neptunium (strain ATCC 15444), this protein is Large-conductance mechanosensitive channel.